A 678-amino-acid chain; its full sequence is DNA ligase (678 aa).

Residues 47–51, 96–97, and E122 contribute to the NAD(+) site; these read DSDYD and SL. K124 serves as the catalytic N6-AMP-lysine intermediate. Positions 145, 182, 300, and 324 each coordinate NAD(+). The Zn(2+) site is built by C418, C421, C436, and C442. The BRCT domain occupies 602-678; sequence AYNESFTGKT…ILEDNLKDLL (77 aa).

Belongs to the NAD-dependent DNA ligase family. LigA subfamily. It depends on Mg(2+) as a cofactor. Requires Mn(2+) as cofactor.

The enzyme catalyses NAD(+) + (deoxyribonucleotide)n-3'-hydroxyl + 5'-phospho-(deoxyribonucleotide)m = (deoxyribonucleotide)n+m + AMP + beta-nicotinamide D-nucleotide.. Functionally, DNA ligase that catalyzes the formation of phosphodiester linkages between 5'-phosphoryl and 3'-hydroxyl groups in double-stranded DNA using NAD as a coenzyme and as the energy source for the reaction. It is essential for DNA replication and repair of damaged DNA. The sequence is that of DNA ligase from Francisella tularensis subsp. tularensis (strain SCHU S4 / Schu 4).